The primary structure comprises 114 residues: Lymphotactin (114 aa).

Residues 1–21 (MRLLLLTFLGVCCLTPWVVEG) form the signal peptide. C32 and C69 are oxidised to a cystine. A disordered region spans residues 92-114 (KNMAETVPTGAQRSTSTAITLTG). The segment covering 100-114 (TGAQRSTSTAITLTG) has biased composition (polar residues).

This sequence belongs to the intercrine gamma family. As to expression, expressed in activated CD8(+) T cells. In the thymus, expressed by medullary thymic epithelial cells.

It localises to the secreted. Functionally, chemotactic activity for lymphocytes but not for monocytes or neutrophils. In thymus, mediates medullary accumulation of thymic dendritic cells and contributes to regulatoy T cell development, playing a role in self-tolerance establishment. The sequence is that of Lymphotactin (Xcl1) from Mus musculus (Mouse).